The primary structure comprises 125 residues: Large ribosomal subunit protein bL12 (125 aa).

It belongs to the bacterial ribosomal protein bL12 family. In terms of assembly, homodimer. Part of the ribosomal stalk of the 50S ribosomal subunit. Forms a multimeric L10(L12)X complex, where L10 forms an elongated spine to which 2 to 4 L12 dimers bind in a sequential fashion. Binds GTP-bound translation factors.

Its function is as follows. Forms part of the ribosomal stalk which helps the ribosome interact with GTP-bound translation factors. Is thus essential for accurate translation. This chain is Large ribosomal subunit protein bL12, found in Cereibacter sphaeroides (Rhodobacter sphaeroides).